Consider the following 266-residue polypeptide: MSSVFGSVHILAMIAIQLLLTHSVSSLNLTNAYLHHKCSNTQGKYKQGSAFEKNLNLVLSTITSIGNFRDGFRYTEEGEDPNNVFVMFQCRGDSYWSKCPPCISTAVSGLRRRCPRNKGAIIWYDQCLLKISSVASFNKIDYENDFYLSNPNNMSDRGLFNKETSALLEKLAYKASDRNNLDGKQLVLYAAGEKRIGTKKVYAMVQCTKDLIFTKCFECLEGILRKFPQCCDGKRGGRVFGTSCNFRYELYPFLRNYSNSTMRAPY.

A signal peptide spans 1 to 26; it reads MSSVFGSVHILAMIAIQLLLTHSVSS. 2 consecutive Gnk2-homologous domains span residues 33–136 and 142–253; these read YLHH…SVAS and YEND…LYPF.

Belongs to the cysteine-rich repeat secretory protein family.

The protein resides in the secreted. This chain is Cysteine-rich repeat secretory protein 41 (CRRSP41), found in Arabidopsis thaliana (Mouse-ear cress).